The primary structure comprises 289 residues: Formamidopyrimidine-DNA glycosylase (289 aa).

Proline 2 (schiff-base intermediate with DNA) is an active-site residue. Residue glutamate 3 is the Proton donor of the active site. The Proton donor; for beta-elimination activity role is filled by lysine 60. Positions 94, 126, and 167 each coordinate DNA. The FPG-type zinc-finger motif lies at 252 to 287 (QVYGKPAGTPCPRCGTGLARIRIAGRSSVFCPRCQP). Arginine 277 functions as the Proton donor; for delta-elimination activity in the catalytic mechanism.

The protein belongs to the FPG family. In terms of assembly, monomer. Zn(2+) is required as a cofactor.

The enzyme catalyses Hydrolysis of DNA containing ring-opened 7-methylguanine residues, releasing 2,6-diamino-4-hydroxy-5-(N-methyl)formamidopyrimidine.. It catalyses the reaction 2'-deoxyribonucleotide-(2'-deoxyribose 5'-phosphate)-2'-deoxyribonucleotide-DNA = a 3'-end 2'-deoxyribonucleotide-(2,3-dehydro-2,3-deoxyribose 5'-phosphate)-DNA + a 5'-end 5'-phospho-2'-deoxyribonucleoside-DNA + H(+). Functionally, involved in base excision repair of DNA damaged by oxidation or by mutagenic agents. Acts as a DNA glycosylase that recognizes and removes damaged bases. Has a preference for oxidized purines, such as 7,8-dihydro-8-oxoguanine (8-oxoG). Has AP (apurinic/apyrimidinic) lyase activity and introduces nicks in the DNA strand. Cleaves the DNA backbone by beta-delta elimination to generate a single-strand break at the site of the removed base with both 3'- and 5'-phosphates. The sequence is that of Formamidopyrimidine-DNA glycosylase from Thermomicrobium roseum (strain ATCC 27502 / DSM 5159 / P-2).